Here is a 515-residue protein sequence, read N- to C-terminus: Maturase K (515 aa).

Belongs to the intron maturase 2 family. MatK subfamily.

The protein localises to the plastid. It localises to the chloroplast. Its function is as follows. Usually encoded in the trnK tRNA gene intron. Probably assists in splicing its own and other chloroplast group II introns. This Pinus densiflora (Japanese red pine) protein is Maturase K.